The primary structure comprises 118 residues: UPF0125 protein RSc1426 (118 aa).

This sequence belongs to the UPF0125 (RnfH) family.

This chain is UPF0125 protein RSc1426, found in Ralstonia nicotianae (strain ATCC BAA-1114 / GMI1000) (Ralstonia solanacearum).